Consider the following 66-residue polypeptide: Large ribosomal subunit protein uL29 (66 aa).

Belongs to the universal ribosomal protein uL29 family.

The chain is Large ribosomal subunit protein uL29 from Thermotoga sp. (strain RQ2).